We begin with the raw amino-acid sequence, 347 residues long: Haptoglobin (347 aa).

The N-terminal stretch at 1–18 (MRALGAVVTLLLWGQLFA) is a signal peptide. The Sushi domain maps to 31–88 (DSCPKPPEIANGYVEHLVRYRCRQFYRLRAEGDGVYTLNDEKQWVNTVAGEKLPECEA). Intrachain disulfides connect cysteine 52–cysteine 86, cysteine 90–cysteine 207, cysteine 250–cysteine 281, and cysteine 292–cysteine 322. Residues 103-345 (IIGGSMDAKG…LKDWVQETMA (243 aa)) form the Peptidase S1 domain. Asparagine 148, asparagine 182, asparagine 256, and asparagine 264 each carry an N-linked (GlcNAc...) asparagine glycan. The tract at residues 259-264 (VPEKKN) is interaction with CD163.

Belongs to the peptidase S1 family. As to quaternary structure, tetramer of two alpha and two beta chains; disulfide-linked. The hemoglobin/haptoglobin complex is composed of a haptoglobin dimer bound to two hemoglobin alpha-beta dimers. Interacts with CD163. Interacts with ERGIC3. In terms of tissue distribution, expressed by the liver and secreted in plasma.

It localises to the secreted. Its function is as follows. As a result of hemolysis, hemoglobin is found to accumulate in the kidney and is secreted in the urine. Haptoglobin captures, and combines with free plasma hemoglobin to allow hepatic recycling of heme iron and to prevent kidney damage. Haptoglobin also acts as an antioxidant, has antibacterial activity and plays a role in modulating many aspects of the acute phase response. Hemoglobin/haptoglobin complexes are rapidly cleared by the macrophage CD163 scavenger receptor expressed on the surface of liver Kupfer cells through an endocytic lysosomal degradation pathway. This chain is Haptoglobin (Hp), found in Mus musculus (Mouse).